The following is a 228-amino-acid chain: HTH-type transcriptional regulator ArcR (228 aa).

22 to 141 is a binding site for a nucleoside 3',5'-cyclic phosphate; it reads SYINIPVGVL…VKLFSLLSET (120 aa). Residues 155 to 228 form the HTH crp-type domain; that stretch reads KLAKERVTKI…SKNWLVSKDL (74 aa). Residues 188 to 207 constitute a DNA-binding region (H-T-H motif); sequence IQLLSDMAGISRETTSHIIN.

The protein resides in the cytoplasm. In terms of biological role, positively regulates the expression of the arcABDCR operon under anaerobic conditions, thus playing an essential role in arginine catabolism. May also control the expression of genes encoding proteins which are involved in anaerobic metabolism. Can bind cyclic AMP. This is HTH-type transcriptional regulator ArcR (arcR) from Staphylococcus epidermidis (strain ATCC 12228 / FDA PCI 1200).